The chain runs to 487 residues: Glutamyl-tRNA(Gln) amidotransferase subunit A (487 aa).

Active-site charge relay system residues include K79 and S158. The Acyl-ester intermediate role is filled by S182.

This sequence belongs to the amidase family. GatA subfamily. As to quaternary structure, heterotrimer of A, B and C subunits.

The enzyme catalyses L-glutamyl-tRNA(Gln) + L-glutamine + ATP + H2O = L-glutaminyl-tRNA(Gln) + L-glutamate + ADP + phosphate + H(+). In terms of biological role, allows the formation of correctly charged Gln-tRNA(Gln) through the transamidation of misacylated Glu-tRNA(Gln) in organisms which lack glutaminyl-tRNA synthetase. The reaction takes place in the presence of glutamine and ATP through an activated gamma-phospho-Glu-tRNA(Gln). This Ehrlichia chaffeensis (strain ATCC CRL-10679 / Arkansas) protein is Glutamyl-tRNA(Gln) amidotransferase subunit A.